A 259-amino-acid chain; its full sequence is Thiazole synthase (259 aa).

K98 serves as the catalytic Schiff-base intermediate with DXP. 1-deoxy-D-xylulose 5-phosphate is bound by residues G159, 185-186 (AG), and 207-208 (NS).

It belongs to the ThiG family. In terms of assembly, homotetramer. Forms heterodimers with either ThiH or ThiS.

It is found in the cytoplasm. The enzyme catalyses [ThiS sulfur-carrier protein]-C-terminal-Gly-aminoethanethioate + 2-iminoacetate + 1-deoxy-D-xylulose 5-phosphate = [ThiS sulfur-carrier protein]-C-terminal Gly-Gly + 2-[(2R,5Z)-2-carboxy-4-methylthiazol-5(2H)-ylidene]ethyl phosphate + 2 H2O + H(+). The protein operates within cofactor biosynthesis; thiamine diphosphate biosynthesis. Catalyzes the rearrangement of 1-deoxy-D-xylulose 5-phosphate (DXP) to produce the thiazole phosphate moiety of thiamine. Sulfur is provided by the thiocarboxylate moiety of the carrier protein ThiS. In vitro, sulfur can be provided by H(2)S. The chain is Thiazole synthase from Chlorobium phaeobacteroides (strain DSM 266 / SMG 266 / 2430).